The sequence spans 102 residues: Small ribosomal subunit protein uS10 (102 aa).

It belongs to the universal ribosomal protein uS10 family. In terms of assembly, part of the 30S ribosomal subunit.

Functionally, involved in the binding of tRNA to the ribosomes. In Methanobrevibacter smithii (strain ATCC 35061 / DSM 861 / OCM 144 / PS), this protein is Small ribosomal subunit protein uS10.